Reading from the N-terminus, the 431-residue chain is tRNA(Ile)-lysidine synthase (431 aa).

20-25 (SGGLDS) contacts ATP.

It belongs to the tRNA(Ile)-lysidine synthase family.

It localises to the cytoplasm. It carries out the reaction cytidine(34) in tRNA(Ile2) + L-lysine + ATP = lysidine(34) in tRNA(Ile2) + AMP + diphosphate + H(+). In terms of biological role, ligates lysine onto the cytidine present at position 34 of the AUA codon-specific tRNA(Ile) that contains the anticodon CAU, in an ATP-dependent manner. Cytidine is converted to lysidine, thus changing the amino acid specificity of the tRNA from methionine to isoleucine. The polypeptide is tRNA(Ile)-lysidine synthase (Escherichia coli O157:H7).